Consider the following 640-residue polypeptide: Threonine--tRNA ligase (640 aa).

The region spanning 1–61 (MPIITLPDGS…ERDATLQIIT (61 aa)) is the TGS domain. Positions 242–533 (DHRRIGKQLD…LIEHYAGAFP (292 aa)) are catalytic. 3 residues coordinate Zn(2+): Cys-333, His-384, and His-510.

The protein belongs to the class-II aminoacyl-tRNA synthetase family. In terms of assembly, homodimer. Zn(2+) is required as a cofactor.

Its subcellular location is the cytoplasm. The catalysed reaction is tRNA(Thr) + L-threonine + ATP = L-threonyl-tRNA(Thr) + AMP + diphosphate + H(+). In terms of biological role, catalyzes the attachment of threonine to tRNA(Thr) in a two-step reaction: L-threonine is first activated by ATP to form Thr-AMP and then transferred to the acceptor end of tRNA(Thr). Also edits incorrectly charged L-seryl-tRNA(Thr). The polypeptide is Threonine--tRNA ligase (Pseudomonas paraeruginosa (strain DSM 24068 / PA7) (Pseudomonas aeruginosa (strain PA7))).